The sequence spans 96 residues: GTPase HRas (96 aa).

Residue Met-1 is modified to N-acetylmethionine. Thr-2 carries the N-acetylthreonine; in GTPase HRas, N-terminally processed modification. 10 to 17 (GAGGVGKS) contributes to the GTP binding site. Positions 32–40 (YDPTIEDSY) match the Effector region motif. GTP is bound at residue 57–61 (DTAGQ).

Belongs to the small GTPase superfamily. Ras family. In its GTP-bound form interacts with PLCE1. Interacts with TBC1D10C. Interacts with RGL3. Interacts with HSPD1. Found in a complex with at least BRAF, HRAS, MAP2K1, MAPK3 and RGS14. Interacts (active GTP-bound form) with RGS14 (via RBD 1 domain). Forms a signaling complex with RASGRP1 and DGKZ. Interacts with RASSF5. Interacts with PDE6D. Interacts with IKZF3. Interacts with RACK1. Interacts with PIK3CG; the interaction is required for membrane recruitment and beta-gamma G protein dimer-dependent activation of the PI3K gamma complex PIK3CG:PIK3R6. Interacts with RAPGEF2. Interacts (active GTP-bound form) with both SHOC2 and PP1c (all isoforms) to form a tertiary complex; SHOC2 and PP1c preferably bind M-Ras/MRAS, but they also bind K-Ras/KRAS, N-Ras/NRAS and H-Ras/HRAS. Interacts (in GTP-bound form) with Oog1. Interacts (GTP-bound form) with MAPKAP1/SIN1; inhibiting H-Ras/HRAS activity. Post-translationally, ubiquitinated by the BCR(LZTR1) E3 ubiquitin ligase complex at Lys-170 in a non-degradative manner, leading to inhibit Ras signaling by decreasing Ras association with membranes.

It localises to the cell membrane. It is found in the golgi apparatus. The protein localises to the golgi apparatus membrane. The catalysed reaction is GTP + H2O = GDP + phosphate + H(+). Its activity is regulated as follows. Alternates between an inactive form bound to GDP and an active form bound to GTP. Activated by a guanine nucleotide-exchange factor (GEF) and inactivated by a GTPase-activating protein (GAP). Its function is as follows. Ras proteins bind GDP/GTP and possess intrinsic GTPase activity. This chain is GTPase HRas (HRAS), found in Mesocricetus auratus (Golden hamster).